We begin with the raw amino-acid sequence, 214 residues long: Probable transaldolase (214 aa).

Residue K83 is the Schiff-base intermediate with substrate of the active site.

Belongs to the transaldolase family. Type 3B subfamily.

Its subcellular location is the cytoplasm. The enzyme catalyses D-sedoheptulose 7-phosphate + D-glyceraldehyde 3-phosphate = D-erythrose 4-phosphate + beta-D-fructose 6-phosphate. The protein operates within carbohydrate degradation; pentose phosphate pathway; D-glyceraldehyde 3-phosphate and beta-D-fructose 6-phosphate from D-ribose 5-phosphate and D-xylulose 5-phosphate (non-oxidative stage): step 2/3. In terms of biological role, transaldolase is important for the balance of metabolites in the pentose-phosphate pathway. The polypeptide is Probable transaldolase (Desulfatibacillum aliphaticivorans).